A 637-amino-acid chain; its full sequence is 1-deoxy-D-xylulose-5-phosphate synthase (637 aa).

Thiamine diphosphate is bound by residues histidine 72 and 113–115; that span reads GHA. Aspartate 144 provides a ligand contact to Mg(2+). Thiamine diphosphate contacts are provided by residues 145–146, asparagine 174, tyrosine 287, and glutamate 370; that span reads GA. Asparagine 174 lines the Mg(2+) pocket.

It belongs to the transketolase family. DXPS subfamily. As to quaternary structure, homodimer. Mg(2+) serves as cofactor. Requires thiamine diphosphate as cofactor.

The catalysed reaction is D-glyceraldehyde 3-phosphate + pyruvate + H(+) = 1-deoxy-D-xylulose 5-phosphate + CO2. It functions in the pathway metabolic intermediate biosynthesis; 1-deoxy-D-xylulose 5-phosphate biosynthesis; 1-deoxy-D-xylulose 5-phosphate from D-glyceraldehyde 3-phosphate and pyruvate: step 1/1. Catalyzes the acyloin condensation reaction between C atoms 2 and 3 of pyruvate and glyceraldehyde 3-phosphate to yield 1-deoxy-D-xylulose-5-phosphate (DXP). This chain is 1-deoxy-D-xylulose-5-phosphate synthase, found in Prochlorococcus marinus subsp. pastoris (strain CCMP1986 / NIES-2087 / MED4).